The chain runs to 416 residues: Heat shock protein DDB_G0280215 (416 aa).

Residues 37 to 150 (SMDWGWKPRM…SQHISLFGRE (114 aa)) enclose the sHSP domain. Residues 216-235 (ETKERERRIRDTKGETEKKK) form a disordered region.

It belongs to the small heat shock protein (HSP20) family.

The polypeptide is Heat shock protein DDB_G0280215 (Dictyostelium discoideum (Social amoeba)).